The chain runs to 154 residues: Hexachlorocyclohexane dehydrochlorinase 1 (154 aa).

The active site involves D25. The active-site Proton acceptor is the H73.

It belongs to the HCH dehydrochlorinase family. In terms of assembly, homotrimer.

It localises to the periplasm. The catalysed reaction is gamma-hexachlorocyclohexane = (3R,4S,5S,6R)-pentachlorocyclohexene + chloride + H(+). The enzyme catalyses (3R,4S,5S,6R)-pentachlorocyclohexene = (3R,6R)-1,3,4,6-tetrachlorocyclohexa-1,4-diene + chloride + H(+). The protein operates within xenobiotic degradation; hexachlorocyclohexane degradation. Its function is as follows. Catalyzes the conversion of the important environmental pollutant gamma-hexachlorocyclohexane (gamma-HCH or lindane) to 1,3,4,6-tetrachloro-1,4-cyclohexadiene (1,4-TCDN) via gamma-pentachlorocyclohexene (gamma-PCCH). Proceeds by two successive 1,2-anti conformationally dependent dehydrochlorinations. Also shows activity with alpha- and delta-HCH, giving alpha- and delta-PCCH respectively, but not with the beta isomer. The polypeptide is Hexachlorocyclohexane dehydrochlorinase 1 (Sphingobium indicum (strain DSM 16412 / CCM 7286 / MTCC 6364 / B90A)).